The chain runs to 569 residues: Glutamine--tRNA ligase (569 aa).

A disordered region spans residues 1-23; sequence MSKDPMSKPTPEPAAHSKAGPAV. A 'HIGH' region motif is present at residues 50–60; sequence PEPNGYLHIGH. Residues 51–53 and 57–63 contribute to the ATP site; these read EPN and HIGHAKS. L-glutamine is bound by residues D83 and Y228. ATP is bound by residues T247 and 277-278; that span reads RL. Positions 284–288 match the 'KMSKS' region motif; that stretch reads ITSKR.

The protein belongs to the class-I aminoacyl-tRNA synthetase family. In terms of assembly, monomer.

It is found in the cytoplasm. It catalyses the reaction tRNA(Gln) + L-glutamine + ATP = L-glutaminyl-tRNA(Gln) + AMP + diphosphate. The polypeptide is Glutamine--tRNA ligase (Pseudomonas syringae pv. tomato (strain ATCC BAA-871 / DC3000)).